We begin with the raw amino-acid sequence, 1893 residues long: Transcription initiation factor TFIID subunit 1 (1893 aa).

Positions 1-435 constitute a Protein kinase 1 domain; the sequence is MGPGCDLLLR…VTQLHWEDDI (435 aa). Serine 137 is modified (phosphoserine; by autocatalysis). 2 disordered regions span residues 155-184 and 197-224; these read LMPPPPPPPGPMKKDKDQDSITGVSENGEG and ASEKVDFSSSSDSESEMGPQEATQAESE. Pro residues predominate over residues 156–165; the sequence is MPPPPPPPGP. Positions 197-208 are enriched in low complexity; sequence ASEKVDFSSSSD. Serine 328 is modified (phosphoserine; by autocatalysis). Positions 534–557 are disordered; sequence IPDEKEEATSNSPSKESKKESSLK. Residues 538-997 are histone acetyltransferase (HAT); that stretch reads KEEATSNSPS…KIPNKPTQQK (460 aa). At lysine 565 the chain carries N6-acetyllysine. Glycyl lysine isopeptide (Lys-Gly) (interchain with G-Cter in SUMO2) cross-links involve residues lysine 570 and lysine 583. Disordered stretches follow at residues 990 to 1009, 1128 to 1148, 1158 to 1177, and 1254 to 1278; these read PNKPTQQKDDKEPQPVKKTV, MLQNKKTSSQLSREREEQERK, GSAASGNNHRDDDTASVTSL, and RLKRNQEKEKLKGPPEKKPKKMKER. Basic and acidic residues-rich tracts occupy residues 995–1004 and 1139–1148; these read QQKDDKEPQP and SREREEQERK. Positions 1216 to 1294 form a DNA-binding region, HMG box; involved in promoter binding; the sequence is VRIRTTKDEE…CGACGAIGHM (79 aa). Residues 1254–1270 show a composition bias toward basic and acidic residues; that stretch reads RLKRNQEKEKLKGPPEK. The interaction with ASF1A and ASF1B stretch occupies residues 1363-1650; that stretch reads VLKFPKQQLP…TAKEAALEEA (288 aa). A Nuclear localization signal motif is present at residues 1372 to 1379; sequence PPKKKRRV. 2 Bromo domains span residues 1397-1505 and 1519-1628; these read RRRT…LKEK and LLDD…LTEY. The Protein kinase 2 domain occupies 1446–1893; that stretch reads MDLQTLRENV…AGDSDLDSDE (448 aa). The segment at 1651 to 1676 is disordered; it reads ELESLDPMTPGPYTPQPPDLYDTNTS. Pro residues predominate over residues 1659 to 1668; the sequence is TPGPYTPQPP. 5 positions are modified to phosphoserine: serine 1690, serine 1693, alanine 1718, glutamate 1721, and glycine 1723. Positions 1696–1893 are disordered; the sequence is DIPSATPEKQ…AGDSDLDSDE (198 aa). Composition is skewed to acidic residues over residues 1709–1723 and 1741–1756; these read EGEDGDGDLADEEEG and EGEDDEEDAGSDEEGD. Residues serine 1799, serine 1802, and serine 1820 each carry the phosphoserine modification. The segment covering 1830-1840 has biased composition (polar residues); the sequence is KSNTQDTSFSS. Acidic residues predominate over residues 1846-1857; sequence VSEEEEDEEEEE. Serine 1847 is modified (phosphoserine). Over residues 1860 to 1869 the composition is skewed to polar residues; sequence SGPSVLSQVH.

Belongs to the TAF1 family. Component of the TFIID basal transcription factor complex, composed of TATA-box-binding protein TBP, and a number of TBP-associated factors (TAFs), including TAF1, TAF2, TAF3, TAF4, TAF5, TAF6, TAF7, TAF8, TAF9, TAF10, TAF11, TAF12 and TAF13. Interacts with TAF7; the interaction is direct. TAF1, when part of the TFIID complex, interacts with C-terminus of TP53. Part of a TFIID-containing RNA polymerase II pre-initiation complex that is composed of TBP and at least GTF2A1, GTF2A2, GTF2E1, GTF2E2, GTF2F1, GTF2H2, GTF2H3, GTF2H4, GTF2H5, GTF2B, TCEA1, ERCC2, ERCC3, TAF1, TAF2, TAF3, TAF4, TAF5, TAF6, TAF7, TAF8, TAF9, TAF10, TAF11, TAF12 and TAF13. Component of some MLL1/MLL complex, at least composed of the core components KMT2A/MLL1, ASH2L, HCFC1/HCF1, WDR5 and RBBP5, as well as the facultative components BACC1, CHD8, E2F6, HSP70, INO80C, KANSL1, LAS1L, MAX, MCRS1, MGA, KAT8/MOF, PELP1, PHF20, PRP31, RING2, RUVB1/TIP49A, RUVB2/TIP49B, SENP3, TAF1, TAF4, TAF6, TAF7, TAF9 and TEX10. RB1 interacts with the N-terminal domain of TAF1. Interacts with ASF1A and ASF1B. Interacts (via bromo domains) with acetylated lysine residues on the N-terminus of histone H1.4, H2A, H2B, H3 and H4 (in vitro). As to quaternary structure, (Microbial infection) Interacts with SV40 Large T antigen. In terms of assembly, (Microbial infection) Interacts with herpes simplex virus 1 ICP4. The cofactor is Mg(2+). Phosphorylated by casein kinase II in vitro.

It localises to the nucleus. It catalyses the reaction L-seryl-[protein] + ATP = O-phospho-L-seryl-[protein] + ADP + H(+). The enzyme catalyses L-threonyl-[protein] + ATP = O-phospho-L-threonyl-[protein] + ADP + H(+). It carries out the reaction L-lysyl-[protein] + acetyl-CoA = N(6)-acetyl-L-lysyl-[protein] + CoA + H(+). Autophosphorylates on Ser residues. Inhibited by retinoblastoma tumor suppressor protein, RB1. Binding to TAF7 or CIITA inhibits the histone acetyltransferase activity. Its function is as follows. The TFIID basal transcription factor complex plays a major role in the initiation of RNA polymerase II (Pol II)-dependent transcription. TFIID recognizes and binds promoters with or without a TATA box via its subunit TBP, a TATA-box-binding protein, and promotes assembly of the pre-initiation complex (PIC). The TFIID complex consists of TBP and TBP-associated factors (TAFs), including TAF1, TAF2, TAF3, TAF4, TAF5, TAF6, TAF7, TAF8, TAF9, TAF10, TAF11, TAF12 and TAF13. TAF1 is the largest component and core scaffold of the TFIID complex, involved in nucleating complex assembly. TAF1 forms a promoter DNA binding subcomplex of TFIID, together with TAF7 and TAF2. Contains novel N- and C-terminal Ser/Thr kinase domains which can autophosphorylate or transphosphorylate other transcription factors. Phosphorylates TP53 on 'Thr-55' which leads to MDM2-mediated degradation of TP53. Phosphorylates GTF2A1 and GTF2F1 on Ser residues. Possesses DNA-binding activity. Essential for progression of the G1 phase of the cell cycle. Exhibits histone acetyltransferase activity towards histones H3 and H4. In Homo sapiens (Human), this protein is Transcription initiation factor TFIID subunit 1.